The following is a 645-amino-acid chain: Glucans biosynthesis glucosyltransferase H (645 aa).

A disordered region spans residues M1–P28. Helical transmembrane passes span L64–W84, L98–I118, A423–I443, A465–I485, A504–L524, S558–P578, and L580–V600.

This sequence belongs to the glycosyltransferase 2 family. OpgH subfamily.

The protein localises to the cell inner membrane. It participates in glycan metabolism; osmoregulated periplasmic glucan (OPG) biosynthesis. Involved in the biosynthesis of osmoregulated periplasmic glucans (OPGs). The protein is Glucans biosynthesis glucosyltransferase H of Xanthomonas campestris pv. campestris (strain B100).